Here is a 129-residue protein sequence, read N- to C-terminus: Iron-sulfur cluster assembly 1 homolog, mitochondrial (129 aa).

The transit peptide at 1–12 (MSASIARATVRA) directs the protein to the mitochondrion. Fe cation contacts are provided by Cys-57, Cys-121, and Cys-123.

The protein belongs to the HesB/IscA family.

It localises to the mitochondrion. Its function is as follows. Involved in the maturation of mitochondrial 4Fe-4S proteins functioning late in the iron-sulfur cluster assembly pathway. Probably involved in the binding of an intermediate of Fe/S cluster assembly. The protein is Iron-sulfur cluster assembly 1 homolog, mitochondrial (isca1) of Danio rerio (Zebrafish).